A 478-amino-acid chain; its full sequence is Trigger factor (478 aa).

A compositionally biased stretch (basic and acidic residues) spans 154 to 167; it reads MAKDSRSFEPREEG. Disordered stretches follow at residues 154 to 173 and 444 to 478; these read MAKD…AQSG and LFAE…KAAG. The PPIase FKBP-type domain maps to 173 to 258; it reads GDRVTIDFVG…VKAVAAPGET (86 aa).

The protein belongs to the FKBP-type PPIase family. Tig subfamily.

The protein resides in the cytoplasm. The enzyme catalyses [protein]-peptidylproline (omega=180) = [protein]-peptidylproline (omega=0). Functionally, involved in protein export. Acts as a chaperone by maintaining the newly synthesized protein in an open conformation. Functions as a peptidyl-prolyl cis-trans isomerase. The polypeptide is Trigger factor (Methylorubrum populi (strain ATCC BAA-705 / NCIMB 13946 / BJ001) (Methylobacterium populi)).